Reading from the N-terminus, the 108-residue chain is Phosphoribosyl-AMP cyclohydrolase (108 aa).

Residue Asp-73 coordinates Mg(2+). Zn(2+) is bound at residue Cys-74. Mg(2+) contacts are provided by Asp-75 and Asp-77. The Zn(2+) site is built by Cys-90 and Cys-97.

It belongs to the PRA-CH family. As to quaternary structure, homodimer. The cofactor is Mg(2+). Zn(2+) serves as cofactor.

The protein localises to the cytoplasm. It carries out the reaction 1-(5-phospho-beta-D-ribosyl)-5'-AMP + H2O = 1-(5-phospho-beta-D-ribosyl)-5-[(5-phospho-beta-D-ribosylamino)methylideneamino]imidazole-4-carboxamide. Its pathway is amino-acid biosynthesis; L-histidine biosynthesis; L-histidine from 5-phospho-alpha-D-ribose 1-diphosphate: step 3/9. Functionally, catalyzes the hydrolysis of the adenine ring of phosphoribosyl-AMP. In Lactiplantibacillus plantarum (strain ATCC BAA-793 / NCIMB 8826 / WCFS1) (Lactobacillus plantarum), this protein is Phosphoribosyl-AMP cyclohydrolase.